Here is a 376-residue protein sequence, read N- to C-terminus: Succinyl-diaminopimelate desuccinylase (376 aa).

A Zn(2+)-binding site is contributed by histidine 74. The active site involves aspartate 76. Aspartate 105 serves as a coordination point for Zn(2+). Glutamate 135 (proton acceptor) is an active-site residue. Zn(2+)-binding residues include glutamate 136, glutamate 164, and histidine 349.

The protein belongs to the peptidase M20A family. DapE subfamily. As to quaternary structure, homodimer. Requires Zn(2+) as cofactor. It depends on Co(2+) as a cofactor.

It catalyses the reaction N-succinyl-(2S,6S)-2,6-diaminopimelate + H2O = (2S,6S)-2,6-diaminopimelate + succinate. It participates in amino-acid biosynthesis; L-lysine biosynthesis via DAP pathway; LL-2,6-diaminopimelate from (S)-tetrahydrodipicolinate (succinylase route): step 3/3. Functionally, catalyzes the hydrolysis of N-succinyl-L,L-diaminopimelic acid (SDAP), forming succinate and LL-2,6-diaminopimelate (DAP), an intermediate involved in the bacterial biosynthesis of lysine and meso-diaminopimelic acid, an essential component of bacterial cell walls. The polypeptide is Succinyl-diaminopimelate desuccinylase (Zymomonas mobilis subsp. mobilis (strain ATCC 31821 / ZM4 / CP4)).